An 89-amino-acid chain; its full sequence is Small ribosomal subunit protein uS15 (89 aa).

It belongs to the universal ribosomal protein uS15 family. In terms of assembly, part of the 30S ribosomal subunit. Forms a bridge to the 50S subunit in the 70S ribosome, contacting the 23S rRNA.

Its function is as follows. One of the primary rRNA binding proteins, it binds directly to 16S rRNA where it helps nucleate assembly of the platform of the 30S subunit by binding and bridging several RNA helices of the 16S rRNA. Functionally, forms an intersubunit bridge (bridge B4) with the 23S rRNA of the 50S subunit in the ribosome. The sequence is that of Small ribosomal subunit protein uS15 from Nitratidesulfovibrio vulgaris (strain DP4) (Desulfovibrio vulgaris).